The chain runs to 118 residues: Small ribosomal subunit protein uS13 (118 aa).

The disordered stretch occupies residues 94-118 (GLPVRGQRTKTNARTRKGPRKPIRK).

This sequence belongs to the universal ribosomal protein uS13 family. As to quaternary structure, part of the 30S ribosomal subunit. Forms a loose heterodimer with protein S19. Forms two bridges to the 50S subunit in the 70S ribosome.

In terms of biological role, located at the top of the head of the 30S subunit, it contacts several helices of the 16S rRNA. In the 70S ribosome it contacts the 23S rRNA (bridge B1a) and protein L5 of the 50S subunit (bridge B1b), connecting the 2 subunits; these bridges are implicated in subunit movement. Contacts the tRNAs in the A and P-sites. The protein is Small ribosomal subunit protein uS13 of Pseudomonas aeruginosa (strain LESB58).